The sequence spans 151 residues: Cytochrome c-type biogenesis protein CcmE (151 aa).

The Cytoplasmic portion of the chain corresponds to 1–9 (MKGLKKKRR). A helical; Signal-anchor for type II membrane protein transmembrane segment spans residues 10-30 (IQIITLAFVALAGSTALIGYA). Over 31–151 (MRDGINFFRS…FQHTEDQPQG (121 aa)) the chain is Periplasmic. The heme site is built by His-123 and Tyr-127.

The protein belongs to the CcmE/CycJ family.

The protein resides in the cell inner membrane. Its function is as follows. Heme chaperone required for the biogenesis of c-type cytochromes. Transiently binds heme delivered by CcmC and transfers the heme to apo-cytochromes in a process facilitated by CcmF and CcmH. In Cereibacter sphaeroides (strain ATCC 17025 / ATH 2.4.3) (Rhodobacter sphaeroides), this protein is Cytochrome c-type biogenesis protein CcmE.